The primary structure comprises 436 residues: Nicotinate phosphoribosyltransferase (436 aa).

Histidine 231 bears the Phosphohistidine; by autocatalysis mark.

The protein belongs to the NAPRTase family. In terms of processing, transiently phosphorylated on a His residue during the reaction cycle. Phosphorylation strongly increases the affinity for substrates and increases the rate of nicotinate D-ribonucleotide production. Dephosphorylation regenerates the low-affinity form of the enzyme, leading to product release.

It carries out the reaction nicotinate + 5-phospho-alpha-D-ribose 1-diphosphate + ATP + H2O = nicotinate beta-D-ribonucleotide + ADP + phosphate + diphosphate. It participates in cofactor biosynthesis; NAD(+) biosynthesis; nicotinate D-ribonucleotide from nicotinate: step 1/1. Catalyzes the synthesis of beta-nicotinate D-ribonucleotide from nicotinate and 5-phospho-D-ribose 1-phosphate at the expense of ATP. This chain is Nicotinate phosphoribosyltransferase, found in Vibrio campbellii (strain ATCC BAA-1116).